The chain runs to 355 residues: Ion-translocating oxidoreductase complex subunit D (355 aa).

Helical transmembrane passes span Trp23–Thr43, Leu44–Phe64, Ala78–Ala109, and Val129–Ile149. Residue Thr194 is modified to FMN phosphoryl threonine. 5 helical membrane passes run Phe221–Leu241, Ile250–Pro270, Thr273–Ala293, Ile307–Pro327, and Asp328–Thr348.

This sequence belongs to the NqrB/RnfD family. The complex is composed of six subunits: RnfA, RnfB, RnfC, RnfD, RnfE and RnfG. Requires FMN as cofactor.

Its subcellular location is the cell inner membrane. Functionally, part of a membrane-bound complex that couples electron transfer with translocation of ions across the membrane. In Vibrio vulnificus (strain CMCP6), this protein is Ion-translocating oxidoreductase complex subunit D.